The sequence spans 101 residues: Small ribosomal subunit protein uS14 (101 aa).

The disordered stretch occupies residues 1–21 (MAKVSLIKKNESRKKKSQSLH). Over residues 11-21 (ESRKKKSQSLH) the composition is skewed to basic residues.

It belongs to the universal ribosomal protein uS14 family. Part of the 30S ribosomal subunit. Contacts proteins S3 and S10.

In terms of biological role, binds 16S rRNA, required for the assembly of 30S particles and may also be responsible for determining the conformation of the 16S rRNA at the A site. This is Small ribosomal subunit protein uS14 from Rickettsia canadensis (strain McKiel).